The following is a 661-amino-acid chain: 7-beta-hydroxy-3-oxochol-24-oyl-CoA 4-desaturase (661 aa).

Residue glutamine 104 participates in FMN binding. Position 168-171 (168-171 (HCAH)) interacts with substrate. The active-site Proton donor is tyrosine 173. Residues arginine 222, lysine 298, and 320-321 (GR) contribute to the FMN site. Residues cysteine 344, cysteine 347, cysteine 351, and cysteine 363 each coordinate [4Fe-4S] cluster. Residues glycine 394, glutamate 413, glutamine 421, lysine 431, and alanine 458 each coordinate FAD.

The protein in the N-terminal section; belongs to the NADH:flavin oxidoreductase/NADH oxidase family. In terms of assembly, homotrimer. FMN serves as cofactor. It depends on FAD as a cofactor. The cofactor is [4Fe-4S] cluster.

It carries out the reaction 7beta-hydroxy-3-oxochol-24-oyl-CoA + NAD(+) = 7beta-hydroxy-3-oxochol-4-en-24-oyl-CoA + NADH + H(+). The protein operates within lipid metabolism; bile acid degradation. Its activity is regulated as follows. Activity is inhibited by sulfhydryl-reactive compounds, acriflavine, o-phenanthroline and EDTA. NADH-dependent flavin oxidoreductase. Stereo-specific NAD(H)-dependent 3-oxo-delta4-cholenoic acid oxidoreductase involved in bile acid 7beta-dehydroxylation. The sequence is that of 7-beta-hydroxy-3-oxochol-24-oyl-CoA 4-desaturase from Clostridium scindens (strain JCM 10418 / VPI 12708).